The sequence spans 231 residues: MNNFFQGYNLLFQHSLFASYMDWFHSFNCSLLLGVLVFVTLLFGYLIFGTFYFKSKKIEYQFGELLCSIFPTIILLMQMVPSLSLLYYYGLMNLDSNLTVKVTGHQWYWSYEYSDIPGLEFDSYMKSLDQLSLGEPRLLEVDNRCVIPCDTNIRFCITSADVIHAWALNSLSVKLDAMSGILSTFSYSFPMVGVFYGQCSEICGANHSFMPIALEVTLLDNFKSWCFGTME.

Over 1–30 the chain is Mitochondrial intermembrane; that stretch reads MNNFFQGYNLLFQHSLFASYMDWFHSFNCS. Residues 31–52 traverse the membrane as a helical segment; that stretch reads LLLGVLVFVTLLFGYLIFGTFY. Over 53–69 the chain is Mitochondrial matrix; it reads FKSKKIEYQFGELLCSI. The chain crosses the membrane as a helical span at residues 70–89; it reads FPTIILLMQMVPSLSLLYYY. Topologically, residues 90–231 are mitochondrial intermembrane; that stretch reads GLMNLDSNLT…FKSWCFGTME (142 aa). Cu cation contacts are provided by His164, Cys199, Glu201, Cys203, His207, and Met210. Glu201 is a binding site for Mg(2+).

This sequence belongs to the cytochrome c oxidase subunit 2 family. Component of the cytochrome c oxidase (complex IV, CIV), a multisubunit enzyme composed of a catalytic core of 3 subunits and several supernumerary subunits. The complex exists as a monomer or a dimer and forms supercomplexes (SCs) in the inner mitochondrial membrane with ubiquinol-cytochrome c oxidoreductase (cytochrome b-c1 complex, complex III, CIII). It depends on Cu cation as a cofactor.

It localises to the mitochondrion inner membrane. It carries out the reaction 4 Fe(II)-[cytochrome c] + O2 + 8 H(+)(in) = 4 Fe(III)-[cytochrome c] + 2 H2O + 4 H(+)(out). In terms of biological role, component of the cytochrome c oxidase, the last enzyme in the mitochondrial electron transport chain which drives oxidative phosphorylation. The respiratory chain contains 3 multisubunit complexes succinate dehydrogenase (complex II, CII), ubiquinol-cytochrome c oxidoreductase (cytochrome b-c1 complex, complex III, CIII) and cytochrome c oxidase (complex IV, CIV), that cooperate to transfer electrons derived from NADH and succinate to molecular oxygen, creating an electrochemical gradient over the inner membrane that drives transmembrane transport and the ATP synthase. Cytochrome c oxidase is the component of the respiratory chain that catalyzes the reduction of oxygen to water. Electrons originating from reduced cytochrome c in the intermembrane space (IMS) are transferred via the dinuclear copper A center (CU(A)) of subunit 2 and heme A of subunit 1 to the active site in subunit 1, a binuclear center (BNC) formed by heme A3 and copper B (CU(B)). The BNC reduces molecular oxygen to 2 water molecules using 4 electrons from cytochrome c in the IMS and 4 protons from the mitochondrial matrix. The polypeptide is Cytochrome c oxidase subunit 2 (Caenorhabditis elegans).